Reading from the N-terminus, the 516-residue chain is Cytochrome P450 1A2 (516 aa).

O-linked (GlcNAc) serine glycosylation is present at Ser69. Phe226 serves as a coordination point for substrate. Heme is bound at residue Cys458.

Belongs to the cytochrome P450 family. In terms of assembly, interacts with PGRMC1; the interaction requires PGRMC1 homodimerization. Heme serves as cofactor. As to expression, liver.

Its subcellular location is the endoplasmic reticulum membrane. The protein resides in the microsome membrane. The catalysed reaction is an organic molecule + reduced [NADPH--hemoprotein reductase] + O2 = an alcohol + oxidized [NADPH--hemoprotein reductase] + H2O + H(+). The enzyme catalyses 17beta-estradiol + reduced [NADPH--hemoprotein reductase] + O2 = 2-hydroxy-17beta-estradiol + oxidized [NADPH--hemoprotein reductase] + H2O + H(+). It catalyses the reaction 17beta-estradiol + reduced [NADPH--hemoprotein reductase] + O2 = 4-hydroxy-17beta-estradiol + oxidized [NADPH--hemoprotein reductase] + H2O + H(+). It carries out the reaction estrone + reduced [NADPH--hemoprotein reductase] + O2 = 2-hydroxyestrone + oxidized [NADPH--hemoprotein reductase] + H2O + H(+). The catalysed reaction is estrone + reduced [NADPH--hemoprotein reductase] + O2 = 4-hydroxyestrone + oxidized [NADPH--hemoprotein reductase] + H2O + H(+). The enzyme catalyses cholesterol + reduced [NADPH--hemoprotein reductase] + O2 = 25-hydroxycholesterol + oxidized [NADPH--hemoprotein reductase] + H2O + H(+). It catalyses the reaction all-trans-retinol + reduced [NADPH--hemoprotein reductase] + O2 = all-trans-retinal + oxidized [NADPH--hemoprotein reductase] + 2 H2O + H(+). It carries out the reaction all-trans-retinal + reduced [NADPH--hemoprotein reductase] + O2 = all-trans-retinoate + oxidized [NADPH--hemoprotein reductase] + H2O + 2 H(+). The catalysed reaction is (5Z,8Z,11Z,14Z)-eicosatetraenoate + reduced [NADPH--hemoprotein reductase] + O2 = (14R,15S)-epoxy-(5Z,8Z,11Z)-eicosatrienoate + oxidized [NADPH--hemoprotein reductase] + H2O + H(+). The enzyme catalyses (5Z,8Z,11Z,14Z)-eicosatetraenoate + reduced [NADPH--hemoprotein reductase] + O2 = (14S,15R)-epoxy-(5Z,8Z,11Z)-eicosatrienoate + oxidized [NADPH--hemoprotein reductase] + H2O + H(+). It catalyses the reaction (5Z,8Z,11Z,14Z,17Z)-eicosapentaenoate + reduced [NADPH--hemoprotein reductase] + O2 = (17R,18S)-epoxy-(5Z,8Z,11Z,14Z)-eicosatetraenoate + oxidized [NADPH--hemoprotein reductase] + H2O + H(+). It carries out the reaction (4Z,7Z,10Z,13Z,16Z,19Z)-docosahexaenoate + reduced [NADPH--hemoprotein reductase] + O2 = (19R,20S)-epoxy-(4Z,7Z,10Z,13Z,16Z)-docosapentaenoate + oxidized [NADPH--hemoprotein reductase] + H2O + H(+). The catalysed reaction is (5S)-hydroperoxy-(6E,8Z,11Z,14Z)-eicosatetraenoate = 5-oxo-(6E,8Z,11Z,14Z)-eicosatetraenoate + H2O. The enzyme catalyses (12S)-hydroperoxy-(5Z,8Z,10E,14Z)-eicosatetraenoate = 12-oxo-(5Z,8Z,10E,14Z)-eicosatetraenoate + H2O. It catalyses the reaction (15S)-hydroperoxy-(5Z,8Z,11Z,13E)-eicosatetraenoate = 15-oxo-(5Z,8Z,11Z,13E)-eicosatetraenoate + H2O. It carries out the reaction (13S)-hydroperoxy-(9Z,11E)-octadecadienoate = 13-oxo-(9Z,11E)-octadecadienoate + H2O. The catalysed reaction is (5Z,8Z,11Z,14Z)-eicosatetraenoate + reduced [NADPH--hemoprotein reductase] + O2 = 13-hydroxy-(5Z,8Z,11Z,14Z)-eicosatetraenoate + oxidized [NADPH--hemoprotein reductase] + H2O + H(+). The enzyme catalyses (5Z,8Z,11Z,14Z)-eicosatetraenoate + reduced [NADPH--hemoprotein reductase] + O2 = 19-hydroxy-(5Z,8Z,11Z,14Z)-eicosatetraenoate + oxidized [NADPH--hemoprotein reductase] + H2O + H(+). It catalyses the reaction (9Z,12Z)-octadecadienoate + reduced [NADPH--hemoprotein reductase] + O2 = 11-hydroxy-(9Z,12Z)-octadecadienoate + oxidized [NADPH--hemoprotein reductase] + H2O + H(+). The protein operates within cofactor metabolism; retinol metabolism. It functions in the pathway steroid metabolism; cholesterol metabolism. Its pathway is lipid metabolism; arachidonate metabolism. In terms of biological role, a cytochrome P450 monooxygenase involved in the metabolism of various endogenous substrates, including fatty acids, steroid hormones and vitamins. Mechanistically, uses molecular oxygen inserting one oxygen atom into a substrate, and reducing the second into a water molecule, with two electrons provided by NADPH via cytochrome P450 reductase (NADPH--hemoprotein reductase). Catalyzes the hydroxylation of carbon-hydrogen bonds. Exhibits high catalytic activity for the formation of hydroxyestrogens from estrone (E1) and 17beta-estradiol (E2), namely 2-hydroxy E1 and E2. Metabolizes cholesterol toward 25-hydroxycholesterol, a physiological regulator of cellular cholesterol homeostasis. May act as a major enzyme for all-trans retinoic acid biosynthesis in the liver. Catalyzes two successive oxidative transformation of all-trans retinol to all-trans retinal and then to the active form all-trans retinoic acid. Primarily catalyzes stereoselective epoxidation of the last double bond of polyunsaturated fatty acids (PUFA), displaying a strong preference for the (R,S) stereoisomer. Catalyzes bisallylic hydroxylation and omega-1 hydroxylation of PUFA. May also participate in eicosanoids metabolism by converting hydroperoxide species into oxo metabolites (lipoxygenase-like reaction, NADPH-independent). Plays a role in the oxidative metabolism of xenobiotics. Catalyzes the N-hydroxylation of heterocyclic amines and the O-deethylation of phenacetin. Metabolizes caffeine via N3-demethylation. This Homo sapiens (Human) protein is Cytochrome P450 1A2.